Reading from the N-terminus, the 631-residue chain is Coiled-coil domain-containing protein 93 (631 aa).

2 disordered regions span residues 1-23 and 214-243; these read MGLPRGPEGQGLPEVETREDEEQ and QSKMEKAEDKKTALPAGLSATEKADAHEED. Residues 1-430 are sufficient for interaction with CCDC22; that stretch reads MGLPRGPEGQ…LKAERAPRGD (430 aa). Residues 215–225 show a composition bias toward basic and acidic residues; it reads SKMEKAEDKKT. 3 positions are modified to phosphoserine: Ser298, Ser301, and Ser305. The stretch at 309-631 forms a coiled coil; the sequence is LGTSQLHRRK…LLSKVKAKAS (323 aa). The segment covering 421-433 has biased composition (basic and acidic residues); it reads LKAERAPRGDEKT. Residues 421–447 form a disordered region; sequence LKAERAPRGDEKTLSSGEPPGTLTSAM. The sufficient for interaction with WASHC2C stretch occupies residues 448-631; it reads THDEDLDRRY…LLSKVKAKAS (184 aa).

Belongs to the CCDC93 family. As to quaternary structure, component of the commander complex consisting of the CCC subcomplex and the retriever subcomplex. Component of the CCC (COMMD/CCDC22/CCDC93) subcomplex consisting of COMMD1, COMMD2, COMMD3, COMMD4, COMMD5, COMMD6, COMMD7, COMMD8, COMMD9, COMMD10, CCDC22 and CCDC93. Forms a coiled-coil heterodimer with CCDC22; this heterodimer interacts with the guanine nucleotide exchange factor DENND10; the interaction is direct. Interacts with WASHC1. Interacts directly with WASHC2C. Interacts with SNX17 and SNX31.

The protein localises to the early endosome. Its function is as follows. Component of the commander complex that is essential for endosomal recycling of transmembrane cargos; the commander complex is composed of composed of the CCC subcomplex and the retriever subcomplex. Component of the CCC complex, which is involved in the regulation of endosomal recycling of surface proteins, including integrins, signaling receptor and channels. The CCC complex associates with SNX17, retriever and WASH complexes to prevent lysosomal degradation and promote cell surface recycling of numerous cargos such as integrins ITGA5:ITGB1. Involved in copper-dependent ATP7A trafficking between the trans-Golgi network and vesicles in the cell periphery; the function is proposed to depend on its association within the CCC complex and cooperation with the WASH complex on early endosomes and is dependent on its interaction with WASHC2C. Functionally, (Microbial infection) The CCC complex, in collaboration with the heterotrimeric retriever complex, mediates the exit of human papillomavirus to the cell surface. The chain is Coiled-coil domain-containing protein 93 (CCDC93) from Homo sapiens (Human).